The chain runs to 464 residues: MMIEIGTTKYVIYAKVIVDGYVEKHDIIGAIFGQTEGLLGSDLDLRDLQKSGRIGRIDVELENINGKSYAKLIFPSSLDRVETAIIAATIETLDRVGPCIATIKVLNIEDIRIKKRQYITDRAKELLKSIVDTTIDTYEIAEEIKEFVRSEEIIEMGNEKLPSGPNVEDSDTIIIVEGRADVLNLLRCGIKNAIAVGGTSIPESIIELSKKKTTTIFTDGDRGGELILKEAIQTCDIDYVARAPKGREVEELTKKEVVKYLRSKIPIEQYIQFHSNKCNELLKKSKEYRSNTINNNNDSGKISIDSIISENATNDIGELPVSKTSKNERNNTKVIDENIEKNNQNIKEDNNIEIKQSDISEILKKDCSEQWEYIESLLNDISNTDNIKIITNDNIIKTIHYSELDKIDKSDIQMVMSDMPITQKITDLFHECSPIIIGRDINITKKPAKLKVFSHDMLKNMVCL.

Residues 171 to 245 (DTIIIVEGRA…DIDYVARAPK (75 aa)) enclose the Toprim domain. 3 residues coordinate Mg(2+): Glu177, Asp219, and Asp221.

It belongs to the archaeal DnaG primase family. In terms of assembly, forms a ternary complex with MCM helicase and DNA. It depends on Mg(2+) as a cofactor.

The enzyme catalyses ssDNA + n NTP = ssDNA/pppN(pN)n-1 hybrid + (n-1) diphosphate.. In terms of biological role, RNA polymerase that catalyzes the synthesis of short RNA molecules used as primers for DNA polymerase during DNA replication. The chain is DNA primase DnaG from Methanococcus aeolicus (strain ATCC BAA-1280 / DSM 17508 / OCM 812 / Nankai-3).